A 252-amino-acid chain; its full sequence is uncharacterized protein (252 aa).

The protein belongs to the methyltransferase superfamily.

This is an uncharacterized protein from Mycobacterium sp. (strain JLS).